Here is a 136-residue protein sequence, read N- to C-terminus: Large ribosomal subunit protein eL27 (136 aa).

The 36-residue stretch at 5–40 (MKPGKVVLVLAGRYSGRKAVIVKNIDDGTSDRPYSH) folds into the KOW domain. N6-acetyllysine is present on residues Lys27 and Lys93.

Belongs to the eukaryotic ribosomal protein eL27 family. Component of the large ribosomal subunit. Interacts with RRP1B. Component of the large ribosomal subunit. Interacts with RRP1B. Interacts with DHX33.

It localises to the cytoplasm. It is found in the cytosol. Its subcellular location is the rough endoplasmic reticulum. Functionally, component of the large ribosomal subunit. Required for proper rRNA processing and maturation of 28S and 5.8S rRNAs. This chain is Large ribosomal subunit protein eL27 (RPL27), found in Bos taurus (Bovine).